Reading from the N-terminus, the 309-residue chain is Putative S-adenosyl-L-methionine-dependent methyltransferase Mvan_0104 (309 aa).

S-adenosyl-L-methionine contacts are provided by residues Asp-134 and 163–164 (DL).

This sequence belongs to the UPF0677 family.

Exhibits S-adenosyl-L-methionine-dependent methyltransferase activity. This Mycolicibacterium vanbaalenii (strain DSM 7251 / JCM 13017 / BCRC 16820 / KCTC 9966 / NRRL B-24157 / PYR-1) (Mycobacterium vanbaalenii) protein is Putative S-adenosyl-L-methionine-dependent methyltransferase Mvan_0104.